Consider the following 199-residue polypeptide: NADH-quinone oxidoreductase subunit C (199 aa).

It belongs to the complex I 30 kDa subunit family. In terms of assembly, NDH-1 is composed of 14 different subunits. Subunits NuoB, C, D, E, F, and G constitute the peripheral sector of the complex.

Its subcellular location is the cell inner membrane. The enzyme catalyses a quinone + NADH + 5 H(+)(in) = a quinol + NAD(+) + 4 H(+)(out). Its function is as follows. NDH-1 shuttles electrons from NADH, via FMN and iron-sulfur (Fe-S) centers, to quinones in the respiratory chain. The immediate electron acceptor for the enzyme in this species is believed to be ubiquinone. Couples the redox reaction to proton translocation (for every two electrons transferred, four hydrogen ions are translocated across the cytoplasmic membrane), and thus conserves the redox energy in a proton gradient. In Rhodopseudomonas palustris (strain BisB18), this protein is NADH-quinone oxidoreductase subunit C.